Here is a 170-residue protein sequence, read N- to C-terminus: RNA polymerase sigma factor TcsR (170 aa).

A sigma-70 factor domain-4 region spans residues 122–169 (IKDLTQNEKNILRKIYLHGLRESEISRELNISRQAVNKTHLRALEKLK). The H-T-H motif DNA-binding region spans 143–162 (ESEISRELNISRQAVNKTHL).

Belongs to the sigma-70 factor family.

Its function is as follows. Sigma factors are initiation factors that promote the attachment of RNA polymerase to specific initiation sites and are then released. Transcriptional regulator specifically required to activate expression of the toxin gene locus, composed of tcsL and tcdE/utxA. The sequence is that of RNA polymerase sigma factor TcsR from Paraclostridium sordellii (strain ATCC 9714 / DSM 2141 / JCM 3814 / LMG 15708 / NCIMB 10717 / 211) (Clostridium sordellii).